The primary structure comprises 418 residues: Serine protease inhibitor A3N (418 aa).

An N-terminal signal peptide occupies residues 1-29; it reads MTRLVTLELLMAGIGSALLCFPDCILGED. Ser93 bears the Phosphoserine mark. N-linked (GlcNAc...) asparagine glycans are attached at residues Asn104, Asn258, and Asn269. An RCL region spans residues 367 to 394; sequence GTEAAAATGVKFVPMSAKLDPLIIAFDR.

Belongs to the serpin family. In terms of processing, N-glycosylated. As to expression, liver.

The protein localises to the secreted. This chain is Serine protease inhibitor A3N (Serpina3n), found in Rattus norvegicus (Rat).